We begin with the raw amino-acid sequence, 594 residues long: Sucrose transport protein SUC3 (594 aa).

Residue S2 is modified to N-acetylserine. The Cytoplasmic portion of the chain corresponds to 2-58; sequence SDSVSISVPYRNLRKEIELETVTKHRQNESGSSSFSESASPSNHSDSADGESVSKNC. The interval 23–50 is disordered; it reads VTKHRQNESGSSSFSESASPSNHSDSAD. Positions 31-46 are enriched in low complexity; sequence SGSSSFSESASPSNHS. A helical membrane pass occupies residues 59-79; it reads SLVTLVLSCTVAAGVQFGWAL. Residues 80–98 are Extracellular-facing; it reads QLSLLTPYIQTLGISHAFS. A helical membrane pass occupies residues 99–119; sequence SFIWLCGPITGLVVQPFVGIW. The Cytoplasmic segment spans residues 120 to 131; it reads SDKCTSKYGRRR. The helical transmembrane segment at 132 to 152 threads the bilayer; it reads PFILVGSFMISIAVIIIGFSA. Topologically, residues 153–174 are extracellular; sequence DIGYLLGDSKEHCSTFKGTRTR. A helical membrane pass occupies residues 175–195; sequence AAVVFIIGFWLLDLANNTVQG. The Cytoplasmic portion of the chain corresponds to 196-214; it reads PARALLADLSGPDQRNTAN. Residues 215–235 form a helical membrane-spanning segment; the sequence is AVFCLWMAIGNILGFSAGASG. The Extracellular portion of the chain corresponds to 236 to 257; the sequence is KWQEWFPFLTSRACCAACGNLK. A helical transmembrane segment spans residues 258–278; sequence AAFLLAVVFLTICTLVTIYFA. The Cytoplasmic segment spans residues 279–365; sequence KEIPFTSNKP…LTSLRHLPPA (87 aa). A helical transmembrane segment spans residues 366–386; sequence MHSVLIVMALTWLSWFPFFLF. The Extracellular segment spans residues 387 to 417; that stretch reads DTDWMGREVYHGDPTGDSLHMELYDQGVREG. A helical membrane pass occupies residues 418 to 438; sequence ALGLLLNSVVLGISSFLIEPM. Residues 439–445 lie on the Cytoplasmic side of the membrane; that stretch reads CQRMGAR. Residues 446-466 traverse the membrane as a helical segment; it reads VVWALSNFTVFACMAGTAVIS. At 467–489 the chain is on the extracellular side; it reads LMSLSDDKNGIEYIMRGNETTRT. Residue N484 is glycosylated (N-linked (GlcNAc...) asparagine). A helical transmembrane segment spans residues 490–510; that stretch reads AAVIVFALLGFPLAITYSVPF. Residues 511–525 are Cytoplasmic-facing; sequence SVTAEVTADSGGGQG. Residues 526–546 traverse the membrane as a helical segment; it reads LAIGVLNLAIVIPQMIVSLGA. Residues 547 to 555 lie on the Extracellular side of the membrane; the sequence is GPWDQLFGG. A helical membrane pass occupies residues 556-576; the sequence is GNLPAFVLASVAAFAAGVIAL. Residues 577–594 are Cytoplasmic-facing; that stretch reads QRLPTLSSSFKSTGFHIG.

Belongs to the glycoside-pentoside-hexuronide (GPH) cation symporter transporter (TC 2.A.2.4) family. As to quaternary structure, homodimer. Interacts with SUC2 and SUC4. In terms of tissue distribution, mostly localized in parenchymatic cells next to vascular tissues (at protein level). Present in stipules, trichomes, hydathodes and guard cells of source leaves, as well as in lateral root tips and flowers.

It is found in the cell membrane. The enzyme catalyses sucrose(out) + H(+)(out) = sucrose(in) + H(+)(in). It participates in glycan biosynthesis; sucrose metabolism. Inhibited by protonophores (e.g. dinitrophenol and carbonyl cyanide m-chlorophenyl-hydrazone (CCCP)) and SH group inhibitors (e.g. p-chloromercuribenzene sulphonic acid (PCMBS)). In terms of biological role, responsible for the transport of sucrose into the cell, with the concomitant uptake of protons (symport system). Can also transport maltose at a lesser rate. May also transport biotin. Probably involved in carpel maturation that leads to pod shatter and seed dispersal. The chain is Sucrose transport protein SUC3 from Arabidopsis thaliana (Mouse-ear cress).